Reading from the N-terminus, the 146-residue chain is Snaclec CTL-Eoc124 (146 aa).

The N-terminal stretch at 1–23 (MGRFISVSFGLLVVFLSLSGTGA) is a signal peptide. 3 disulfides stabilise this stretch: Cys25-Cys36, Cys53-Cys142, and Cys119-Cys134. One can recognise a C-type lectin domain in the interval 32–143 (YQGHCYRVFN…CSRTNNVACK (112 aa)).

Belongs to the snaclec family. As to quaternary structure, heterodimer; disulfide-linked. Expressed by the venom gland.

The protein localises to the secreted. Interferes with one step of hemostasis (modulation of platelet aggregation, or coagulation cascade, for example). This is Snaclec CTL-Eoc124 from Echis ocellatus (Ocellated saw-scaled viper).